An 806-amino-acid chain; its full sequence is Disintegrin and metalloproteinase domain-containing protein 1b (806 aa).

The first 33 residues, 1–33 (MERLKLGKIPEHWCIRLVAMLLLAIIFLPSTFC), serve as a signal peptide directing secretion. The tract at residues 169 to 188 (CSVTPKDSPGDTSHPPRSRK) is disordered. One can recognise a Peptidase M12B domain in the interval 203–397 (KYVEMFVVVN…HRGVCLLDEP (195 aa)). N-linked (GlcNAc...) asparagine glycosylation is present at asparagine 224. 7 disulfides stabilise this stretch: cysteine 313–cysteine 392, cysteine 353–cysteine 376, cysteine 355–cysteine 361, cysteine 462–cysteine 482, cysteine 635–cysteine 647, cysteine 641–cysteine 653, and cysteine 655–cysteine 664. Histidine 338 lines the Zn(2+) pocket. Residue glutamate 339 is part of the active site. 2 residues coordinate Zn(2+): histidine 342 and histidine 348. Residues asparagine 375 and asparagine 476 are each glycosylated (N-linked (GlcNAc...) asparagine). The region spanning 406–490 (AANCGNGVVE…ACPSDRKAQD (85 aa)) is the Disintegrin domain. Positions 631–665 (FSFPCSPSKQCNKHGVCNDLGNCHCSFGFAPPDCK) constitute an EGF-like domain. Residues 668–694 (GTGGSVDSGPAVNLSNDSSPGPNSTQS) form a disordered region. Residues asparagine 680, asparagine 683, and asparagine 690 are each glycosylated (N-linked (GlcNAc...) asparagine). The segment covering 680–694 (NLSNDSSPGPNSTQS) has biased composition (polar residues). A helical membrane pass occupies residues 705–725 (LIVLAVILVLMILLIIICIIS). The Cytoplasmic portion of the chain corresponds to 726-806 (AYTKSETASE…KDEDEEEGEE (81 aa)). The segment at 735 to 806 (EAGPSELEEL…KDEDEEEGEE (72 aa)) is disordered. The span at 740 to 806 (ELEELPEGEK…KDEDEEEGEE (67 aa)) shows a compositional bias: acidic residues.

In terms of assembly, heterodimer with ADAM2/fertilin subunit beta. As to expression, testis.

Its subcellular location is the membrane. May play a role in spermatogenesis and sperm maturation. The sequence is that of Disintegrin and metalloproteinase domain-containing protein 1b (Adam1b) from Mus musculus (Mouse).